The chain runs to 203 residues: MVKKAIFGGTFDPIHNGHIHIAYEAIYRLGLDEIVFMPTGNPPHKAKKSITDAFLRYEMVKVAIRSESKFTVSNYEVNKTTLSYTYSTLEHFNKLESKTEWYFLTGADCLMDIEKWSRVDSIFRLCKFIVFNRPGFPAFTSESIEDQKKKIEDKYSTNIIYLDAPLFDISSTVIRNSVKEGKNVNYFLPESVCNIIKQLNLYK.

This sequence belongs to the NadD family.

The enzyme catalyses nicotinate beta-D-ribonucleotide + ATP + H(+) = deamido-NAD(+) + diphosphate. The protein operates within cofactor biosynthesis; NAD(+) biosynthesis; deamido-NAD(+) from nicotinate D-ribonucleotide: step 1/1. In terms of biological role, catalyzes the reversible adenylation of nicotinate mononucleotide (NaMN) to nicotinic acid adenine dinucleotide (NaAD). In Clostridium kluyveri (strain ATCC 8527 / DSM 555 / NBRC 12016 / NCIMB 10680 / K1), this protein is Probable nicotinate-nucleotide adenylyltransferase.